The following is a 423-amino-acid chain: NDP-N-acetyl-D-galactosaminuronic acid dehydrogenase (423 aa).

11-28 (TISVVGLGYIGLPTATVL) is an NAD(+) binding site. K218 acts as the Proton donor/acceptor in catalysis. C272 (nucleophile) is an active-site residue.

Belongs to the UDP-glucose/GDP-mannose dehydrogenase family.

Its function is as follows. Probably involved in the synthesis of sugar components of EPS I, by converting NDP-N-acetyl-D-galactosamine into NDP-N-acetyl-D-galactosaminuronic acid. The polypeptide is NDP-N-acetyl-D-galactosaminuronic acid dehydrogenase (epsD) (Ralstonia nicotianae (strain ATCC BAA-1114 / GMI1000) (Ralstonia solanacearum)).